The primary structure comprises 485 residues: 4-alpha-glucanotransferase (485 aa).

This sequence belongs to the disproportionating enzyme family.

The protein localises to the cytoplasm. It catalyses the reaction Transfers a segment of a (1-&gt;4)-alpha-D-glucan to a new position in an acceptor, which may be glucose or a (1-&gt;4)-alpha-D-glucan.. This is 4-alpha-glucanotransferase (malQ) from Aquifex aeolicus (strain VF5).